The primary structure comprises 505 residues: MEDKVLIAVGTVAVVAVLSKLKSAVTKPKLNLPPGPWTLPLIGSIHHIVSNPLPYRAMRELAHKHGPLMMLWLGEVPTLVVSSPEAAQAITKTHDVSFADRHINSTVDILTFNGMDMVFGSYGEQWRQLRKLSVLELLSAARVQSFQRIREEEVARFMRSLAASASAGATVDLSKMISSFINDTFVRESIGSRCKYQDEYLAALDTAIRVAAELSVGNIFPSSRVLQSLSTARRKAIASRDEMARILGQIIRETKESMDQGDKTSNESMISVLLRLQKDAGLPIELTDNVVMALMFDLFGAGSDTSSTTLTWCMTELVRYPATMAKAQAEVREAFKGKTTITEDDLSTANLRYLKLVVKEALRLHCPVPLLLPRKCREACQVMGYDIPKGTCVFVNVWAICRDPRYWEDAEEFKPERFENSNLDYKGTYYEYLPFGSGRRMCPGANLGVANLELALASLLYHFDWKLPSGQEPKDVDVWEAAGLVAKKNIGLVLHPVSHIAPVNA.

A helical transmembrane segment spans residues 7 to 26 (IAVGTVAVVAVLSKLKSAVT). C442 serves as a coordination point for heme.

This sequence belongs to the cytochrome P450 family. It depends on heme as a cofactor.

The protein localises to the membrane. The enzyme catalyses (S)-beta-macrocarpene + 3 reduced [NADPH--hemoprotein reductase] + 3 O2 = zealexin A1 + 3 oxidized [NADPH--hemoprotein reductase] + 4 H2O + 4 H(+). Functionally, involved in production of the antifungal phytoalexin zealexin A1. The enzyme sequentially oxidizes(S)-beta-macrocarpene via alcohol and aldehyde intermediates to form zealexin A1, a maize phytoalexin that provides biochemical protection against fungal infection. The sequence is that of Zealexin A1 synthase from Zea mays (Maize).